A 231-amino-acid polypeptide reads, in one-letter code: Ribose-5-phosphate isomerase A (231 aa).

Residues 32-35, 85-88, and 98-101 each bind substrate; these read TGST, DGAD, and KGGG. Residue Glu107 is the Proton acceptor of the active site. Substrate is bound at residue Lys125.

This sequence belongs to the ribose 5-phosphate isomerase family. Homodimer.

It catalyses the reaction aldehydo-D-ribose 5-phosphate = D-ribulose 5-phosphate. It functions in the pathway carbohydrate degradation; pentose phosphate pathway; D-ribose 5-phosphate from D-ribulose 5-phosphate (non-oxidative stage): step 1/1. In terms of biological role, catalyzes the reversible conversion of ribose-5-phosphate to ribulose 5-phosphate. In Burkholderia orbicola (strain MC0-3), this protein is Ribose-5-phosphate isomerase A.